A 195-amino-acid polypeptide reads, in one-letter code: Alkyl hydroperoxide reductase C (195 aa).

The 167-residue stretch at Leu4 to Ser170 folds into the Thioredoxin domain. An Isoglutamyl lysine isopeptide (Lys-Gln) (interchain with Q-Cter in protein Pup) cross-link involves residue Lys41. Residue Cys61 is the Cysteine sulfenic acid (-SOH) intermediate of the active site.

The protein belongs to the peroxiredoxin family. AhpC/Prx1 subfamily. As to quaternary structure, homodimer; disulfide-linked, upon oxidation. 6 homodimers assemble to form a ring-like dodecamer. Identified in a complex with AhpD, DlaT and Lpd.

The protein localises to the cytoplasm. The catalysed reaction is N(6)-[(R)-dihydrolipoyl]-L-lysyl-[lipoyl-carrier protein] + a hydroperoxide = N(6)-[(R)-lipoyl]-L-lysyl-[lipoyl-carrier protein] + an alcohol + H2O. Its function is as follows. Thiol-specific peroxidase that catalyzes the reduction of hydrogen peroxide and organic hydroperoxides to water and alcohols, respectively. Plays a role in cell protection against oxidative stress by detoxifying peroxides. Together with AhpD, DlaT and Lpd, constitutes an NADH-dependent peroxidase active against hydrogen and alkyl peroxides as well as serving as a peroxynitrite reductase, thus protecting the bacterium against reactive nitrogen intermediates and oxidative stress generated by the host immune system. Does not however seem to play a role in detoxification of isoniazid. The protein is Alkyl hydroperoxide reductase C of Mycolicibacterium smegmatis (strain ATCC 700084 / mc(2)155) (Mycobacterium smegmatis).